Reading from the N-terminus, the 262-residue chain is 3-methyl-2-oxobutanoate hydroxymethyltransferase (262 aa).

Asp43 and Asp82 together coordinate Mg(2+). 3-methyl-2-oxobutanoate contacts are provided by residues 43–44 (DS), Asp82, and Lys111. Residue Glu113 coordinates Mg(2+). Glu180 (proton acceptor) is an active-site residue.

Belongs to the PanB family. In terms of assembly, homodecamer; pentamer of dimers. It depends on Mg(2+) as a cofactor.

The protein resides in the cytoplasm. It catalyses the reaction 3-methyl-2-oxobutanoate + (6R)-5,10-methylene-5,6,7,8-tetrahydrofolate + H2O = 2-dehydropantoate + (6S)-5,6,7,8-tetrahydrofolate. Its pathway is cofactor biosynthesis; (R)-pantothenate biosynthesis; (R)-pantoate from 3-methyl-2-oxobutanoate: step 1/2. Its function is as follows. Catalyzes the reversible reaction in which hydroxymethyl group from 5,10-methylenetetrahydrofolate is transferred onto alpha-ketoisovalerate to form ketopantoate. The chain is 3-methyl-2-oxobutanoate hydroxymethyltransferase from Wolinella succinogenes (strain ATCC 29543 / DSM 1740 / CCUG 13145 / JCM 31913 / LMG 7466 / NCTC 11488 / FDC 602W) (Vibrio succinogenes).